The following is a 634-amino-acid chain: 1-deoxy-D-xylulose-5-phosphate synthase (634 aa).

Thiamine diphosphate-binding positions include His-77 and 118-120; that span reads GHA. A Mg(2+)-binding site is contributed by Asp-149. Thiamine diphosphate is bound by residues 150-151, Asn-178, Tyr-289, and Glu-371; that span reads AS. A Mg(2+)-binding site is contributed by Asn-178.

This sequence belongs to the transketolase family. DXPS subfamily. Homodimer. The cofactor is Mg(2+). It depends on thiamine diphosphate as a cofactor.

The enzyme catalyses D-glyceraldehyde 3-phosphate + pyruvate + H(+) = 1-deoxy-D-xylulose 5-phosphate + CO2. Its pathway is metabolic intermediate biosynthesis; 1-deoxy-D-xylulose 5-phosphate biosynthesis; 1-deoxy-D-xylulose 5-phosphate from D-glyceraldehyde 3-phosphate and pyruvate: step 1/1. Its function is as follows. Catalyzes the acyloin condensation reaction between C atoms 2 and 3 of pyruvate and glyceraldehyde 3-phosphate to yield 1-deoxy-D-xylulose-5-phosphate (DXP). The chain is 1-deoxy-D-xylulose-5-phosphate synthase from Leptospira interrogans serogroup Icterohaemorrhagiae serovar copenhageni (strain Fiocruz L1-130).